A 143-amino-acid polypeptide reads, in one-letter code: Transcriptional regulator MraZ (143 aa).

2 consecutive SpoVT-AbrB domains span residues 5-47 (THTP…PRAE) and 76-119 (TDEQ…DAQA).

It belongs to the MraZ family. Forms oligomers.

It localises to the cytoplasm. It is found in the nucleoid. The protein is Transcriptional regulator MraZ of Mycobacterium leprae (strain Br4923).